The primary structure comprises 287 residues: tRNA pseudouridine synthase B (287 aa).

Residue aspartate 38 is the Nucleophile of the active site.

Belongs to the pseudouridine synthase TruB family. Type 1 subfamily.

The enzyme catalyses uridine(55) in tRNA = pseudouridine(55) in tRNA. Responsible for synthesis of pseudouridine from uracil-55 in the psi GC loop of transfer RNAs. This chain is tRNA pseudouridine synthase B, found in Mycoplasma mobile (strain ATCC 43663 / 163K / NCTC 11711) (Mesomycoplasma mobile).